Here is a 438-residue protein sequence, read N- to C-terminus: Zinc finger protein 641 (438 aa).

The interval 1–53 is disordered; the sequence is MQAEDRSQFGSAAEMLSEQTAALGTGWESMNVQLDGAEPQVERGSQEERPWRT. Polar residues predominate over residues 17–32; that stretch reads SEQTAALGTGWESMNV. The span at 40-51 shows a compositional bias: basic and acidic residues; that stretch reads QVERGSQEERPW. A KRAB domain is found at 109–181; it reads VTIKDVSLCF…DPQDLEERDI (73 aa). The tract at residues 171-265 is transactivation; the sequence is PDPQDLEERD…EMDSLLRPHT (95 aa). Serine 191 bears the Phosphoserine mark. C2H2-type zinc fingers lie at residues 264 to 286, 292 to 314, and 320 to 342; these read HTCP…QQTH, YSCL…QKTH, and SRCS…QRVH. The segment at 345–367 is disordered; the sequence is GKSCKGQEVGESPGTRKRQRAPP. C2H2-type zinc fingers lie at residues 372–394 and 400–422; these read HVCT…WLTH and FQCP…LLTH. Residues 418-438 are disordered; the sequence is HLLTHQGQSPRNSWDRGTSVF. Residues 422-438 show a composition bias toward polar residues; it reads HQGQSPRNSWDRGTSVF. Serine 426 bears the Phosphoserine mark.

It belongs to the krueppel C2H2-type zinc-finger protein family. In terms of tissue distribution, highly expressed in skeletal muscle, moderate expression in heart, liver, and pancreas, lower expression in placenta, no expression seen in brain, lung, and kidney.

Its subcellular location is the nucleus. Its function is as follows. Transcriptional activator. Activates transcriptional activities of SRE and AP-1. The sequence is that of Zinc finger protein 641 (ZNF641) from Homo sapiens (Human).